Consider the following 366-residue polypeptide: Histidinol-phosphate aminotransferase (366 aa).

Lys-227 is subject to N6-(pyridoxal phosphate)lysine.

The protein belongs to the class-II pyridoxal-phosphate-dependent aminotransferase family. Histidinol-phosphate aminotransferase subfamily. As to quaternary structure, homodimer. Requires pyridoxal 5'-phosphate as cofactor.

It carries out the reaction L-histidinol phosphate + 2-oxoglutarate = 3-(imidazol-4-yl)-2-oxopropyl phosphate + L-glutamate. The protein operates within amino-acid biosynthesis; L-histidine biosynthesis; L-histidine from 5-phospho-alpha-D-ribose 1-diphosphate: step 7/9. This is Histidinol-phosphate aminotransferase from Campylobacter hominis (strain ATCC BAA-381 / DSM 21671 / CCUG 45161 / LMG 19568 / NCTC 13146 / CH001A).